The sequence spans 730 residues: Kinesin-like protein KIF2C (730 aa).

The segment at 1–256 (MERLVATRLV…MDCHRISMAD (256 aa)) is globular. Residues 79 to 98 (NMPPQRNVSSQNHKRKTISK) form a disordered region. The tract at residues 211–242 (EQRAQNYERRMKRAQDYDTSVPNWEFGKMIKE) is negative regulator of microtubule-binding. Residues 262 to 592 (RICVCVRKRP…LRYADRVKEL (331 aa)) form the Kinesin motor domain. ATP-binding positions include R268 and 352–359 (GQTGSGKT). The stretch at 599 to 730 (TNDDNLQMED…QISKKKRSNK (132 aa)) forms a coiled coil.

This sequence belongs to the TRAFAC class myosin-kinesin ATPase superfamily. Kinesin family. MCAK/KIF2 subfamily.

It localises to the cytoplasm. The protein localises to the cytoskeleton. The protein resides in the nucleus. It is found in the chromosome. Its subcellular location is the centromere. It localises to the kinetochore. Functionally, promotes ATP-dependent removal of tubulin dimers from microtubules. Regulates the turnover of microtubules at the kinetochore and functions in chromosome segregation during mitosis. May play a role in chromosome congression and may be required for the lateral to end-on conversion of the chromosome-microtubule attachment. The chain is Kinesin-like protein KIF2C (kif2c) from Xenopus laevis (African clawed frog).